A 714-amino-acid polypeptide reads, in one-letter code: Phenylalanine 2-monooxygenase precursor (714 aa).

A propeptide spans Met-1–Glu-15 (removed in mature form; occupies the channel of the substrate amino acid from the outside of the protein to the interior flavin ring in the precursor). Residues Gly-2, Gly-68, and Glu-95–Ala-96 each bind FAD. The propeptide at Ile-108–Lys-109 is linker peptide. Residues Arg-120, Gly-141 to Arg-144, and Val-375 each bind FAD. Residue Arg-144 participates in substrate binding. Tyr-537 is a binding site for substrate. FAD contacts are provided by residues Ser-652–Asp-653 and Gly-660–Leu-662. Gly-660 contributes to the substrate binding site.

It belongs to the phenylalanine 2-monooxygenase family. In terms of assembly, heterotetramer composed of 2 alpha and 2 beta subunits. The cofactor is FAD. In terms of processing, proteolytically cleaved to yield the active enzyme. Cleavage of the linkage between the 2 subunits causes reshaping of the oxygen channel and the hydrophobic environment around the flavin ring. Removal of the prosequence causes opening of the amino acid channel.

It carries out the reaction L-phenylalanine + O2 = 2-phenylacetamide + CO2 + H2O. Its function is as follows. Catalyzes both oxygenative decarboxylation and oxidative deamination, depending on the substrate used. Has high activity for L-Phe and L-Tyr, but relatively low activities for L-Met and L-Trp. L-Phe is mainly oxygenated and L-Met is mainly oxidized. The chain is Phenylalanine 2-monooxygenase precursor from Pseudomonas sp.